Reading from the N-terminus, the 357-residue chain is UDP-N-acetylglucosamine--N-acetylmuramyl-(pentapeptide) pyrophosphoryl-undecaprenol N-acetylglucosamine transferase (357 aa).

Residues threonine 11–glycine 13, asparagine 120, arginine 161, serine 188, and glutamine 281 each bind UDP-N-acetyl-alpha-D-glucosamine.

It belongs to the glycosyltransferase 28 family. MurG subfamily.

It localises to the cell inner membrane. It carries out the reaction di-trans,octa-cis-undecaprenyl diphospho-N-acetyl-alpha-D-muramoyl-L-alanyl-D-glutamyl-meso-2,6-diaminopimeloyl-D-alanyl-D-alanine + UDP-N-acetyl-alpha-D-glucosamine = di-trans,octa-cis-undecaprenyl diphospho-[N-acetyl-alpha-D-glucosaminyl-(1-&gt;4)]-N-acetyl-alpha-D-muramoyl-L-alanyl-D-glutamyl-meso-2,6-diaminopimeloyl-D-alanyl-D-alanine + UDP + H(+). The protein operates within cell wall biogenesis; peptidoglycan biosynthesis. Functionally, cell wall formation. Catalyzes the transfer of a GlcNAc subunit on undecaprenyl-pyrophosphoryl-MurNAc-pentapeptide (lipid intermediate I) to form undecaprenyl-pyrophosphoryl-MurNAc-(pentapeptide)GlcNAc (lipid intermediate II). In Prochlorococcus marinus (strain SARG / CCMP1375 / SS120), this protein is UDP-N-acetylglucosamine--N-acetylmuramyl-(pentapeptide) pyrophosphoryl-undecaprenol N-acetylglucosamine transferase.